The sequence spans 141 residues: Large ribosomal subunit protein uL11B/uL11C (141 aa).

Belongs to the universal ribosomal protein uL11 family. As to quaternary structure, part of the ribosomal stalk of the 50S ribosomal subunit. Interacts with L10 and the large rRNA to form the base of the stalk. L10 forms an elongated spine to which L12 dimers bind in a sequential fashion forming a multimeric L10(L12)X complex. In terms of processing, one or more lysine residues are methylated.

In terms of biological role, forms part of the ribosomal stalk which helps the ribosome interact with GTP-bound translation factors. In Bacillus cereus (strain ATCC 14579 / DSM 31 / CCUG 7414 / JCM 2152 / NBRC 15305 / NCIMB 9373 / NCTC 2599 / NRRL B-3711), this protein is Large ribosomal subunit protein uL11B/uL11C.